The following is a 442-amino-acid chain: C4-dicarboxylate transport protein (442 aa).

8 helical membrane passes run 19-39 (QLYFQVVVAIVAGVLLGHFEP), 55-75 (LVKMIIAPVIFLTIVTGIAGM), 90-110 (AYFLFFSTLALVVGMVVAHVV), 161-181 (ILQVLFVAVLFGISLAMVGDA), 199-219 (LVGILMKAAPLGAFGAIAFTI), 232-252 (WLVGSFYITSLLFVVVVLGFV), 318-338 (IYMTLAALFIAQATNTHLTLG), and 366-386 (AATLAVVPEVPVAGMALILGV).

It belongs to the dicarboxylate/amino acid:cation symporter (DAACS) (TC 2.A.23) family.

The protein localises to the cell inner membrane. Its function is as follows. Responsible for the transport of dicarboxylates such as succinate, fumarate, and malate from the periplasm across the membrane. This is C4-dicarboxylate transport protein from Delftia acidovorans (strain DSM 14801 / SPH-1).